The primary structure comprises 465 residues: Iron transporter FTH1 (465 aa).

The Vacuolar segment spans residues 1–11 (MAFEDYFSFQI). A helical transmembrane segment spans residues 12–32 (FFIFLRESLEIVVIVSILLTI). At 33–135 (VKQGLSVEDD…LYQKLKIQIL (103 aa)) the chain is on the cytoplasmic side. Positions 44 to 66 (PFEGSSSSAGLPSPNTNTNADST) are disordered. Over residues 46–66 (EGSSSSAGLPSPNTNTNADST) the composition is skewed to polar residues. The helical transmembrane segment at 136 to 156 (AGGAFGLLLCMLIGGAFVSIF) threads the bilayer. Residues 157–170 (YHIGTDLWTLSEHY) lie on the Vacuolar side of the membrane. A helical membrane pass occupies residues 171 to 191 (YEGVLSLVASVIISVMGLFFL). The Cytoplasmic segment spans residues 192–289 (RMGKLREKFR…FFFRYSSSLS (98 aa)). Residues 290–310 (LKICLVVATCFLYLIAAGLFS) traverse the membrane as a helical segment. Over 311–358 (KGVWQLELQDYVNKCNGQDMSEVGNGPGSYDISRSVWHVNCCNGEKDG) the chain is Vacuolar. A helical membrane pass occupies residues 359–379 (GWMIFTAIFGWTNSATVGSVI). At 380-465 (SYNAYWLVLI…LIIDSSGSAN (86 aa)) the chain is on the cytoplasmic side. The segment at 433 to 465 (TSELNSSTSEPDSQRRSKDSSVPLIIDSSGSAN) is disordered. Ser-449 and Ser-453 each carry phosphoserine.

This sequence belongs to the oxidase-dependent Fe transporter (OFeT) (TC 9.A.10.1) family. Interacts with FET5.

It localises to the vacuole membrane. In terms of biological role, high affinity iron transporter probably involved in transport of intravacuolar stores of iron. This Saccharomyces cerevisiae (strain ATCC 204508 / S288c) (Baker's yeast) protein is Iron transporter FTH1 (FTH1).